Here is a 157-residue protein sequence, read N- to C-terminus: Phosphopantetheine adenylyltransferase (157 aa).

Position 8 (Thr8) interacts with substrate. ATP-binding positions include 8–9 (TF) and His16. The substrate site is built by Lys40, Thr72, and Arg86. Residues 87–89 (GLR), Glu97, and 122–128 (YSFLSSS) contribute to the ATP site.

This sequence belongs to the bacterial CoaD family. In terms of assembly, homohexamer. It depends on Mg(2+) as a cofactor.

The protein resides in the cytoplasm. The catalysed reaction is (R)-4'-phosphopantetheine + ATP + H(+) = 3'-dephospho-CoA + diphosphate. The protein operates within cofactor biosynthesis; coenzyme A biosynthesis; CoA from (R)-pantothenate: step 4/5. Functionally, reversibly transfers an adenylyl group from ATP to 4'-phosphopantetheine, yielding dephospho-CoA (dPCoA) and pyrophosphate. This Prochlorococcus marinus (strain MIT 9301) protein is Phosphopantetheine adenylyltransferase.